The following is a 181-amino-acid chain: Inner membrane-spanning protein YciB (181 aa).

A run of 5 helical transmembrane segments spans residues 10–30 (LIIFFAVYKFFDIYIASGALI), 50–70 (MHLITFAMVTVFGTLTLVFHD), 72–92 (AFIKWKVTIIYALFALALGVS), 118–138 (VTWYWVSFFAICGLVNIYVAF), and 148–168 (FKVFGLTALTLINTVITVFYL).

This sequence belongs to the YciB family.

The protein localises to the cell inner membrane. In terms of biological role, plays a role in cell envelope biogenesis, maintenance of cell envelope integrity and membrane homeostasis. This chain is Inner membrane-spanning protein YciB, found in Shewanella sp. (strain MR-7).